A 950-amino-acid polypeptide reads, in one-letter code: UvrABC system protein A (950 aa).

36–43 (GKSGSGKS) is an ATP binding site. The segment at 260–287 (CPLCGFSLPLIEPRLFSFNSPFGACSEC) adopts a C4-type zinc-finger fold. ABC transporter domains are found at residues 317–599 (FKTS…KNSL) and 619–947 (ADKG…MFLK). 651–658 (GVSGSGKS) contributes to the ATP binding site. The C4-type zinc-finger motif lies at 750 to 776 (CEKCQGDGYLNIQMHFLPDVFVPCDLC).

It belongs to the ABC transporter superfamily. UvrA family. Forms a heterotetramer with UvrB during the search for lesions.

Its subcellular location is the cytoplasm. Functionally, the UvrABC repair system catalyzes the recognition and processing of DNA lesions. UvrA is an ATPase and a DNA-binding protein. A damage recognition complex composed of 2 UvrA and 2 UvrB subunits scans DNA for abnormalities. When the presence of a lesion has been verified by UvrB, the UvrA molecules dissociate. This is UvrABC system protein A from Borreliella burgdorferi (strain ATCC 35210 / DSM 4680 / CIP 102532 / B31) (Borrelia burgdorferi).